Reading from the N-terminus, the 859-residue chain is MKLKDTKSRPKQSSYGKFQTKGIKVVGKWKEVKIDPNMFADGQMDDLVCFEELTDYQLVSPAKNPSSLFSKEAPKRKAQAVSEEEEEEEGESSSPKKKIKLKKSKNVATEGTSTQKEFEVKDPELEAQGDGMVCDDPEAGEMTSENLVQTAPKKKKNKAKKGLEPSQSTAAKVPKKAKTWIPEVHDQKADVSAWKDLFVPRPVLRALSFLGFSAPTPIQVLTLAPAIRDKLDILGAAETGSGKTLAFAIPMIHAVLQWQKRNAAPPPSNTEAPPGETRPEAGAETRSPGKAEAESDALPDDTVIESEALPSDTAAEARAKTGGTVSDQALLFGDDDAGEGPSSLIREKPVPKQNENEEENLDKEQTGNLKQELDDKSATCKTYPKRPLLGLVLTPTRELAVQVKQHIDAVARFTGIKTAILVGGMSTQKQQRMLNRRPEIVVATPGRLWELIKEKHYHLRNLRQLRCLVVDEADRMVEKGHFAELSQLLEMLNDSQYNPKRQTLVFSATLTLVHQAPARILHKKHTKKMDKTAKLDLLMQKIGMRGKPKVIDLTRNEATVETLTETKIHCETDEKDFYLYYFLMQYPGRSLVFANSISCIKRLSGLLKVLDIMPLTLHACMHQKQRLRNLEQFARLEDCVLLATDVAARGLDIPKVQHVIHYQVPRTSEIYVHRSGRTARATNEGLSLMLIGPEDVINFKKIYKTLKKDEDIPLFPVQTKYMDVVKERIRLARQIEKSEYRNFQACLHNSWIEQAAAALEIELEEDMYKGGKADQQEERRRQKQMKVLKKELRHLLSQPLFTESQKTKYPTQSGKPPLLVSAPSKSESALSCLSKQRKKKTKKPKEPQPEQPQPSTSAN.

Position 17 is an N6-acetyllysine (K17). A Phosphoserine modification is found at S60. The tract at residues 61–175 (PAKNPSSLFS…SQSTAAKVPK (115 aa)) is disordered. K71 bears the N6-acetyllysine mark. Phosphoserine occurs at positions 82 and 94. Residues 82-91 (SEEEEEEEGE) are compositionally biased toward acidic residues. Residues 95–105 (PKKKIKLKKSK) are compositionally biased toward basic residues. Residues 106–115 (NVATEGTSTQ) show a composition bias toward polar residues. The short motif at 192–220 (SAWKDLFVPRPVLRALSFLGFSAPTPIQV) is the Q motif element. The Helicase ATP-binding domain occupies 224–528 (APAIRDKLDI…RILHKKHTKK (305 aa)). 237–244 (AETGSGKT) contacts ATP. A disordered region spans residues 262-374 (NAAPPPSNTE…QTGNLKQELD (113 aa)). Positions 277–293 (TRPEAGAETRSPGKAEA) are enriched in basic and acidic residues. Phosphoserine occurs at positions 287 and 295. The segment covering 294–304 (ESDALPDDTVI) has biased composition (acidic residues). T302 carries the phosphothreonine modification. A Glycyl lysine isopeptide (Lys-Gly) (interchain with G-Cter in SUMO2) cross-link involves residue K370. The short motif at 471 to 474 (DEAD) is the DEAD box element. Positions 578–723 (YLYYFLMQYP…LFPVQTKYMD (146 aa)) constitute a Helicase C-terminal domain. Glycyl lysine isopeptide (Lys-Gly) (interchain with G-Cter in SUMO2) cross-links involve residues K624, K808, and K825. Composition is skewed to polar residues over residues 799–814 (PLFT…TQSG) and 823–834 (PSKSESALSCLS). The disordered stretch occupies residues 799–859 (PLFTESQKTK…EQPQPSTSAN (61 aa)).

It belongs to the DEAD box helicase family. DDX24/MAK5 subfamily. As to quaternary structure, interacts with FADD. Interacts with RIPK1; this interaction disrupts RLR signaling activation of IFN-dependent transcription factor IRF7. Interacts with NIP7. Interacts with EP300; this interaction prevents TP53 acetylation mediated by EP300. In terms of processing, ubiquitinated by MDM2 without targeting DDX24 for proteasomal degradation. Instead, polyubiquitylated DDX24 promotes interaction with NIP7, a component of pre-rRNP processing complex, and associates with pre-rRNA molecules and pre-ribosomal particles.

Its subcellular location is the cytoplasm. It is found in the nucleus. It carries out the reaction ATP + H2O = ADP + phosphate + H(+). In terms of biological role, ATP-dependent RNA helicase that plays a role in various aspects of RNA metabolism including pre-mRNA splicing and is thereby involved in different biological processes such as cell cycle regulation or innate immunity. Plays an inhibitory role in TP53 transcriptional activity and subsequently in TP53 controlled cell growth arrest and senescence by inhibiting its EP300 mediated acetylation. Negatively regulates cytosolic RNA-mediated innate immune signaling at least in part by affecting RIPK1/IRF7 interactions. Alternatively, possesses antiviral activity by recognizing gammaherpesvirus transcripts in the context of lytic reactivation. Plays an essential role in cell cycle regulation in vascular smooth muscle cells by interacting with and regulating FANCA (Fanconi anemia complementation group A) mRNA. This Pongo abelii (Sumatran orangutan) protein is ATP-dependent RNA helicase DDX24 (DDX24).